A 258-amino-acid polypeptide reads, in one-letter code: 5'-nucleotidase SurE (258 aa).

Asp14, Asp15, Ser45, and Asn101 together coordinate a divalent metal cation.

Belongs to the SurE nucleotidase family. A divalent metal cation serves as cofactor.

The protein resides in the cytoplasm. The catalysed reaction is a ribonucleoside 5'-phosphate + H2O = a ribonucleoside + phosphate. Nucleotidase that shows phosphatase activity on nucleoside 5'-monophosphates. The protein is 5'-nucleotidase SurE of Chlorobium limicola (strain DSM 245 / NBRC 103803 / 6330).